The chain runs to 153 residues: Acetylacetone-cleaving enzyme (153 aa).

As to quaternary structure, homotetramer. It depends on Fe cation as a cofactor.

It carries out the reaction acetylacetone + O2 = methylglyoxal + acetate + H(+). The protein operates within xenobiotic degradation; acetylacetone degradation. Its function is as follows. Cleaves acetylacetone to equimolar amounts of methylglyoxal and acetate, consuming one equivalent of molecular oxygen. The polypeptide is Acetylacetone-cleaving enzyme (dke1) (Acinetobacter johnsonii).